Consider the following 287-residue polypeptide: MDNSVYQVYEDEIQLLEEEIKLLSDKYEDIQQESTFFSDEEVLMSVKLFQREFLEEHKGHGPPLDLKAELESLQRDLSFLVKFTGIQITSHSKKTLEKTGNRTVQKHRLSGNCQSLPFSLEFQLLEVQNKENVSAAITDLSIAIESGQHSELSKFVSRAEENGNLLMFFRNLSSYAEWCEHRRCTFLHFKAKYPNIVTLPEGQEGDHIILRNPQLPGFELMIVWKMHIDEEGTTTPVLDLLPKVPQQALEQKKASIDNAPACFRSMLLLFGIETAIENLIQVVGLEK.

Residues 1–37 are a coiled coil; the sequence is MDNSVYQVYEDEIQLLEEEIKLLSDKYEDIQQESTFF.

It belongs to the CENP-P/CTF19 family. As to quaternary structure, component of the CENPA-HI complex, at least composed of CENPH, CENPI, CENPK, CENPL, CENPM, CENPO and CENPP.

Its subcellular location is the nucleus. It is found in the chromosome. It localises to the centromere. Its function is as follows. Component of the CENPA-HI complex, a centromeric complex involved in assembly of kinetochore proteins, mitotic progression and chromosome segregation. This chain is Centromere protein P (CENPP), found in Gallus gallus (Chicken).